Consider the following 189-residue polypeptide: Probable nicotinate-nucleotide adenylyltransferase (189 aa).

This sequence belongs to the NadD family.

The enzyme catalyses nicotinate beta-D-ribonucleotide + ATP + H(+) = deamido-NAD(+) + diphosphate. Its pathway is cofactor biosynthesis; NAD(+) biosynthesis; deamido-NAD(+) from nicotinate D-ribonucleotide: step 1/1. Its function is as follows. Catalyzes the reversible adenylation of nicotinate mononucleotide (NaMN) to nicotinic acid adenine dinucleotide (NaAD). This is Probable nicotinate-nucleotide adenylyltransferase from Bacillus anthracis (strain CDC 684 / NRRL 3495).